The chain runs to 545 residues: Protein disulfide isomerase-like 1-3 (545 aa).

Residues 1–16 (MWPRAPATPPPPPWPS) show a composition bias toward pro residues. The interval 1 to 24 (MWPRAPATPPPPPWPSKPSAASRS) is disordered. Residues 55-189 (ASSTAFAAAF…IVAYLKRQAG (135 aa)) form the Thioredoxin 1 domain. Asn-87 carries an N-linked (GlcNAc...) asparagine glycan. Active-site nucleophile residues include Cys-107 and Cys-110. Cys-107 and Cys-110 are joined by a disulfide. Asn-349 carries an N-linked (GlcNAc...) asparagine glycan. The Thioredoxin 2 domain occupies 403 to 545 (FTEGTLAPHV…TTTESVKDEL (143 aa)). Active-site nucleophile residues include Cys-453 and Cys-456. An intrachain disulfide couples Cys-453 to Cys-456. The short motif at 542–545 (KDEL) is the Prevents secretion from ER element.

This sequence belongs to the protein disulfide isomerase family.

It localises to the endoplasmic reticulum lumen. It catalyses the reaction Catalyzes the rearrangement of -S-S- bonds in proteins.. In terms of biological role, acts as a protein-folding catalyst that interacts with nascent polypeptides to catalyze the formation, isomerization, and reduction or oxidation of disulfide bonds. May play a role in storage protein biogenesis. The polypeptide is Protein disulfide isomerase-like 1-3 (PDIL1-3) (Oryza sativa subsp. japonica (Rice)).